We begin with the raw amino-acid sequence, 101 residues long: NAD(P)H-quinone oxidoreductase subunit 4L, chloroplastic (101 aa).

Helical transmembrane passes span 2–22 (MLEY…YGLI), 32–52 (MCLE…SDFF), and 61–81 (IFSI…PAIV).

This sequence belongs to the complex I subunit 4L family. NDH is composed of at least 16 different subunits, 5 of which are encoded in the nucleus.

The protein localises to the plastid. It is found in the chloroplast thylakoid membrane. It catalyses the reaction a plastoquinone + NADH + (n+1) H(+)(in) = a plastoquinol + NAD(+) + n H(+)(out). It carries out the reaction a plastoquinone + NADPH + (n+1) H(+)(in) = a plastoquinol + NADP(+) + n H(+)(out). In terms of biological role, NDH shuttles electrons from NAD(P)H:plastoquinone, via FMN and iron-sulfur (Fe-S) centers, to quinones in the photosynthetic chain and possibly in a chloroplast respiratory chain. The immediate electron acceptor for the enzyme in this species is believed to be plastoquinone. Couples the redox reaction to proton translocation, and thus conserves the redox energy in a proton gradient. The sequence is that of NAD(P)H-quinone oxidoreductase subunit 4L, chloroplastic from Populus trichocarpa (Western balsam poplar).